We begin with the raw amino-acid sequence, 213 residues long: Uridine kinase (213 aa).

15 to 22 is an ATP binding site; it reads GASASGKS.

The protein belongs to the uridine kinase family.

It is found in the cytoplasm. The catalysed reaction is uridine + ATP = UMP + ADP + H(+). The enzyme catalyses cytidine + ATP = CMP + ADP + H(+). It functions in the pathway pyrimidine metabolism; CTP biosynthesis via salvage pathway; CTP from cytidine: step 1/3. Its pathway is pyrimidine metabolism; UMP biosynthesis via salvage pathway; UMP from uridine: step 1/1. The chain is Uridine kinase from Proteus mirabilis (strain HI4320).